Here is a 750-residue protein sequence, read N- to C-terminus: Cullin-5 (750 aa).

The region spanning 678 to 739 is the Cullin neddylation domain; the sequence is RFFKLQAAIV…QEYIRRTTDD (62 aa). Lys691 is covalently cross-linked (Glycyl lysine isopeptide (Lys-Gly) (interchain with G-Cter in NEDD8)).

It belongs to the cullin family. In terms of processing, neddylated; which enhances the ubiquitination activity of SCF-like complex.

The protein operates within protein modification; protein ubiquitination. In terms of biological role, probable core component of cullin-based SCF-like E3 ubiquitin-protein ligase complexes which mediate the ubiquitination and subsequent proteasomal degradation of target proteins. The E3 ubiquitin-protein ligase activity of the complex is dependent on the neddylation of the cullin subunit. The chain is Cullin-5 (culE) from Dictyostelium discoideum (Social amoeba).